Reading from the N-terminus, the 370-residue chain is DNA replication and repair protein RecF (370 aa).

An ATP-binding site is contributed by 30 to 37 (GQNGMGKT).

This sequence belongs to the RecF family.

Its subcellular location is the cytoplasm. Functionally, the RecF protein is involved in DNA metabolism; it is required for DNA replication and normal SOS inducibility. RecF binds preferentially to single-stranded, linear DNA. It also seems to bind ATP. In Bacteroides fragilis (strain YCH46), this protein is DNA replication and repair protein RecF.